Here is a 337-residue protein sequence, read N- to C-terminus: GTP 3',8-cyclase (337 aa).

The region spanning 17 to 243 (PFQRQYYYLR…HKSHTDGPAK (227 aa)) is the Radical SAM core domain. R26 contributes to the GTP binding site. [4Fe-4S] cluster-binding residues include C33 and C37. Y39 lines the S-adenosyl-L-methionine pocket. C40 serves as a coordination point for [4Fe-4S] cluster. R76 serves as a coordination point for GTP. G80 serves as a coordination point for S-adenosyl-L-methionine. T107 lines the GTP pocket. S131 contributes to the S-adenosyl-L-methionine binding site. A GTP-binding site is contributed by K168. An S-adenosyl-L-methionine-binding site is contributed by M202. 2 residues coordinate [4Fe-4S] cluster: C265 and C268. 270–272 (RLR) contributes to the GTP binding site. C282 contributes to the [4Fe-4S] cluster binding site.

The protein belongs to the radical SAM superfamily. MoaA family. As to quaternary structure, monomer and homodimer. It depends on [4Fe-4S] cluster as a cofactor.

It catalyses the reaction GTP + AH2 + S-adenosyl-L-methionine = (8S)-3',8-cyclo-7,8-dihydroguanosine 5'-triphosphate + 5'-deoxyadenosine + L-methionine + A + H(+). It participates in cofactor biosynthesis; molybdopterin biosynthesis. Its function is as follows. Catalyzes the cyclization of GTP to (8S)-3',8-cyclo-7,8-dihydroguanosine 5'-triphosphate. The polypeptide is GTP 3',8-cyclase (Haemophilus influenzae (strain ATCC 51907 / DSM 11121 / KW20 / Rd)).